A 339-amino-acid chain; its full sequence is Phenylalanine--tRNA ligase alpha subunit (339 aa).

Glutamate 247 contributes to the Mg(2+) binding site.

This sequence belongs to the class-II aminoacyl-tRNA synthetase family. Phe-tRNA synthetase alpha subunit type 1 subfamily. In terms of assembly, tetramer of two alpha and two beta subunits. It depends on Mg(2+) as a cofactor.

Its subcellular location is the cytoplasm. The catalysed reaction is tRNA(Phe) + L-phenylalanine + ATP = L-phenylalanyl-tRNA(Phe) + AMP + diphosphate + H(+). This is Phenylalanine--tRNA ligase alpha subunit from Deinococcus deserti (strain DSM 17065 / CIP 109153 / LMG 22923 / VCD115).